The chain runs to 516 residues: Acyl-lipid (7-3)-desaturase, chloroplastic (516 aa).

A disordered region spans residues Met1 to Ser25. Residues Met1–Arg47 constitute a chloroplast transit peptide. One can recognise a Cytochrome b5 heme-binding domain in the interval Trp83–Pro148. The heme site is built by His100 and His123. 2 helical membrane passes run Gly186–Ala206 and Leu209–Gly229. Residues His227 to His231 carry the Histidine box-1 motif. The short motif at His262–His267 is the Histidine box-2 element. A run of 4 helical transmembrane segments spans residues Met305–Leu325, Phe354–Ala374, Gly375–Pro395, and Val423–Leu443. The Histidine box-3 signature appears at Gln444–His448.

It belongs to the fatty acid desaturase type 1 family. Fe(2+) is required as a cofactor.

It is found in the plastid. It localises to the chloroplast membrane. It catalyses the reaction a (7Z,10Z,13Z,16Z,19Z)-docosapentaenoyl-containing glycerolipid + 2 Fe(II)-[cytochrome b5] + O2 + 2 H(+) = a (4Z,7Z,10Z,13Z,16Z,19Z)-docosahexaenoyl-containing glycerolipid + 2 Fe(III)-[cytochrome b5] + 2 H2O. The enzyme catalyses a (7Z,10Z,13Z,16Z)-docosatetraenoyl-containing glycerolipid + 2 Fe(II)-[cytochrome b5] + O2 + 2 H(+) = a (4Z,7Z,10Z,13Z,16Z)-docosapentaenoyl-containing glycerolipid + 2 Fe(III)-[cytochrome b5] + 2 H2O. Its function is as follows. Fatty acid desaturase that introduces a cis double bond at the 4-position in 16-carbon polyunsaturated fatty acids that contain a Delta(7) double bond, resulting in the production of 16 carbon fatty acid (7Z,10Z,13Z)-hexadeca-7,10,13-trienoate. The polypeptide is Acyl-lipid (7-3)-desaturase, chloroplastic (Chlamydomonas reinhardtii (Chlamydomonas smithii)).